A 239-amino-acid chain; its full sequence is Tetraspanin-9 (239 aa).

At 1 to 12 the chain is on the cytoplasmic side; that stretch reads MARGCLCCVKYM. Residues 13-33 form a helical membrane-spanning segment; the sequence is LFLFNLLFWLGGCGLLGVGVW. Topologically, residues 34–55 are extracellular; that stretch reads LSVSQGSFATLSPSFPSISAAN. The helical transmembrane segment at 56–76 threads the bilayer; sequence LIITLGAVIMVTGFLGCLGAI. Residues 77-85 lie on the Cytoplasmic side of the membrane; sequence KENKCLLLS. A helical transmembrane segment spans residues 86–106; the sequence is FFITLLVILLAELILLILFFV. Residues 107–203 lie on the Extracellular side of the membrane; that stretch reads YTDNVSENAR…VEEWLDDNKH (97 aa). Asparagine 110 and asparagine 180 each carry an N-linked (GlcNAc...) asparagine glycan. A helical transmembrane segment spans residues 204 to 224; the sequence is LLGTIAMCVLVIQLLGMAFSM. Residues 225–239 are Cytoplasmic-facing; it reads TLYQQIHRSGKKYEA.

Belongs to the tetraspanin (TM4SF) family.

It localises to the membrane. This is Tetraspanin-9 (tspan9) from Salmo salar (Atlantic salmon).